The sequence spans 188 residues: Large ribosomal subunit protein eL18 (188 aa).

The disordered stretch occupies residues 147-188; that stretch reads EAEKHFGPAPGVPHSHTKPYVRSKGRKFERARGRRASRAYKN. Composition is skewed to basic residues over residues 161-171 and 178-188; these read SHTKPYVRSKG and RGRRASRAYKN.

It belongs to the eukaryotic ribosomal protein eL18 family.

It is found in the cytoplasm. The protein is Large ribosomal subunit protein eL18 (rpl-18) of Caenorhabditis elegans.